We begin with the raw amino-acid sequence, 1209 residues long: Phospholipid-transporting ATPase ID (1209 aa).

Over residues 1–12 (MTVPKEMPEKWA) the composition is skewed to basic and acidic residues. A disordered region spans residues 1–36 (MTVPKEMPEKWARAQAPPSWSRKKPSWGTEEERRAR). At 1–64 (MTVPKEMPEK…TSKYNILTFL (64 aa)) the chain is on the cytoplasmic side. A helical membrane pass occupies residues 65-86 (PVNLFEQFQEVANTYFLFLLIL). Over 87–92 (QLIPQI) the chain is Exoplasmic loop. The chain crosses the membrane as a helical span at residues 93-112 (SSLSWFTTIVPLVLVLTITA). The Cytoplasmic portion of the chain corresponds to 113–295 (VKDATDDYFR…TSIDRLMNTL (183 aa)). Residues 296–317 (VLWIFGFLVCMGVILAIGNAIW) traverse the membrane as a helical segment. The Exoplasmic loop segment spans residues 318–346 (EHEVGMRFQVYLPWDEAVDSAFFSGFLSF). The chain crosses the membrane as a helical span at residues 347–368 (WSYIIILNTVVPISLYVSVEVI). Topologically, residues 369 to 889 (RLGHSYFINW…GRWSYLRMCK (521 aa)) are cytoplasmic. D411 serves as the catalytic 4-aspartylphosphate intermediate. Residues D411, K412, T413, E515, F556, K579, R613, T693, G694, D695, R807, and K813 each coordinate ATP. A Mg(2+)-binding site is contributed by D411. T413 is a binding site for Mg(2+). D833 is a binding site for Mg(2+). Residues N836 and D837 each coordinate ATP. D837 lines the Mg(2+) pocket. The chain crosses the membrane as a helical span at residues 890–910 (FLCYFFYKNFAFTMVHFWFGF). Residues 911–922 (FCGFSAQTVYDQ) are Exoplasmic loop-facing. A helical transmembrane segment spans residues 923-942 (YFITLYNIVYTSLPVLAMGV). The Cytoplasmic segment spans residues 943-972 (FDQDVPEQRSMEYPKLYEPGQLNLLFNKRE). Residues 973 to 994 (FFICIAQGIYTSVLMFFIPYGV) traverse the membrane as a helical segment. Topologically, residues 995-1008 (FADATRDDGTQLAD) are exoplasmic loop. The helical transmembrane segment at 1009 to 1031 (YQSFAVTVATSLVIVVSVQIGLD) threads the bilayer. Topologically, residues 1032 to 1037 (TGYWTA) are cytoplasmic. The chain crosses the membrane as a helical span at residues 1038 to 1058 (INHFFIWGSLAVYFAILFAMH). Topologically, residues 1059–1078 (SNGLFDMFPNQFRFVGNAQN) are exoplasmic loop. A helical transmembrane segment spans residues 1079–1103 (TLAQPTVWLTIVLTTVVCIMPVVAF). Residues 1104-1209 (RFLRLNLKPD…SGGADKPLKG (106 aa)) lie on the Cytoplasmic side of the membrane. The residue at position 1175 (S1175) is a Phosphoserine. Residues 1181–1209 (SSSWIESLRRKKSDSASSPSGGADKPLKG) are disordered. Residues 1195 to 1209 (SASSPSGGADKPLKG) are compositionally biased toward low complexity.

The protein belongs to the cation transport ATPase (P-type) (TC 3.A.3) family. Type IV subfamily. In terms of assembly, component of a P4-ATPase flippase complex which consists of a catalytic alpha subunit ATP8B2 and an accessory beta subunit TMEM30A or TMEM30B. It depends on Mg(2+) as a cofactor. Isoform 3 is ubiquitous, with highest expression in aorta, cerebellum and uterus.

It is found in the cell membrane. The protein localises to the endoplasmic reticulum membrane. It catalyses the reaction ATP + H2O + phospholipidSide 1 = ADP + phosphate + phospholipidSide 2.. It carries out the reaction a 1,2-diacyl-sn-glycero-3-phosphocholine(out) + ATP + H2O = a 1,2-diacyl-sn-glycero-3-phosphocholine(in) + ADP + phosphate + H(+). In terms of biological role, catalytic component of P4-ATPase flippase complex, which catalyzes the hydrolysis of ATP coupled to the transport of phosphatidylcholine (PC) from the outer to the inner leaflet of the plasma membrane. May contribute to the maintenance of membrane lipid asymmetry. The protein is Phospholipid-transporting ATPase ID of Homo sapiens (Human).